Consider the following 279-residue polypeptide: Bifunctional protein FolD 1 (279 aa).

Residues Gly-166–Ser-168 and Ser-191 contribute to the NADP(+) site.

This sequence belongs to the tetrahydrofolate dehydrogenase/cyclohydrolase family. As to quaternary structure, homodimer.

The catalysed reaction is (6R)-5,10-methylene-5,6,7,8-tetrahydrofolate + NADP(+) = (6R)-5,10-methenyltetrahydrofolate + NADPH. It catalyses the reaction (6R)-5,10-methenyltetrahydrofolate + H2O = (6R)-10-formyltetrahydrofolate + H(+). It functions in the pathway one-carbon metabolism; tetrahydrofolate interconversion. Functionally, catalyzes the oxidation of 5,10-methylenetetrahydrofolate to 5,10-methenyltetrahydrofolate and then the hydrolysis of 5,10-methenyltetrahydrofolate to 10-formyltetrahydrofolate. In Salinispora arenicola (strain CNS-205), this protein is Bifunctional protein FolD 1.